The chain runs to 159 residues: MKVAVYPGSFDPITNGHLDIIERGSKVFDKLIIGVLVNVDKKGLFEIEERVELIKKVTKHIKNVEVISFNGLLIDFLKAYNAKIILKGLRAVSDFEYEFKMALMNNKLDPDIETVFMMTSAQYSYLSSSSVKQVAKFGGCIEGLVPKEIISDVVRRSKI.

A substrate-binding site is contributed by S9. ATP contacts are provided by residues 9–10 (SF) and H17. 3 residues coordinate substrate: K41, L73, and K87. ATP contacts are provided by residues 88 to 90 (GLR), E98, and 123 to 129 (YSYLSSS).

It belongs to the bacterial CoaD family. As to quaternary structure, homohexamer. Mg(2+) serves as cofactor.

Its subcellular location is the cytoplasm. The enzyme catalyses (R)-4'-phosphopantetheine + ATP + H(+) = 3'-dephospho-CoA + diphosphate. The protein operates within cofactor biosynthesis; coenzyme A biosynthesis; CoA from (R)-pantothenate: step 4/5. Its function is as follows. Reversibly transfers an adenylyl group from ATP to 4'-phosphopantetheine, yielding dephospho-CoA (dPCoA) and pyrophosphate. This Clostridium botulinum (strain Alaska E43 / Type E3) protein is Phosphopantetheine adenylyltransferase.